Reading from the N-terminus, the 882-residue chain is Valine--tRNA ligase (882 aa).

The 'HIGH' region motif lies at 45–55; sequence PNVTGSLHIGH. The 'KMSKS' region signature appears at 525-529; that stretch reads KFSKS. K528 is an ATP binding site. The stretch at 812–881 forms a coiled coil; sequence EGLIDVAKEK…VLKKGIQNLA (70 aa).

This sequence belongs to the class-I aminoacyl-tRNA synthetase family. ValS type 1 subfamily. As to quaternary structure, monomer.

It localises to the cytoplasm. The catalysed reaction is tRNA(Val) + L-valine + ATP = L-valyl-tRNA(Val) + AMP + diphosphate. Its function is as follows. Catalyzes the attachment of valine to tRNA(Val). As ValRS can inadvertently accommodate and process structurally similar amino acids such as threonine, to avoid such errors, it has a 'posttransfer' editing activity that hydrolyzes mischarged Thr-tRNA(Val) in a tRNA-dependent manner. In Leptospira interrogans serogroup Icterohaemorrhagiae serovar copenhageni (strain Fiocruz L1-130), this protein is Valine--tRNA ligase.